The following is a 104-amino-acid chain: Pole-localizer protein TmaR (104 aa).

Coiled coils occupy residues 7–34 (IVNQARRKNKLKRELLDNEKKVRDNRKR) and 76–96 (SAEISKARRDISRRIRELTEE).

The protein belongs to the pole-localizer TmaR family.

The protein resides in the cytoplasm. Pole-localizer protein involved in the regulation of several cellular processes. In Vibrio atlanticus (strain LGP32) (Vibrio splendidus (strain Mel32)), this protein is Pole-localizer protein TmaR.